A 228-amino-acid polypeptide reads, in one-letter code: MEMERINANTIRVMLGNDDLAQRGITVLDLLGNHKQIESFFYSILDEVDKDHTFATNEAVTFQVMPSQSGLELLISRSGQKNDDSAADQTDDEGTDTQVPDYIRQQLQGLDASDQQDHQAVDEGGYIDADKAPQTELVLKLKDFEDFISLADTLRLEGGKSDLYRYKNAYYLVLTFYPNEISSDEAHDQMAVAMEFGDRSPLSSAVLSEYGKRLMETSALETARYYFK.

The disordered stretch occupies residues 79-98 (GQKNDDSAADQTDDEGTDTQ). Positions 85–95 (SAADQTDDEGT) are enriched in acidic residues.

This sequence belongs to the MecA family. As to quaternary structure, homodimer.

Enables the recognition and targeting of unfolded and aggregated proteins to the ClpC protease or to other proteins involved in proteolysis. The chain is Adapter protein MecA from Lacticaseibacillus casei (strain BL23) (Lactobacillus casei).